A 932-amino-acid chain; its full sequence is Isoleucine--tRNA ligase (932 aa).

The 'HIGH' region motif lies at 58 to 68; it reads PYANGDIHIGH. L-isoleucyl-5'-AMP is bound at residue Glu-559. The 'KMSKS' region signature appears at 600–604; sequence KMSKS. Residue Lys-603 participates in ATP binding. Cys-895, Cys-898, Cys-915, and Cys-918 together coordinate Zn(2+).

This sequence belongs to the class-I aminoacyl-tRNA synthetase family. IleS type 1 subfamily. Monomer. The cofactor is Zn(2+).

It localises to the cytoplasm. It catalyses the reaction tRNA(Ile) + L-isoleucine + ATP = L-isoleucyl-tRNA(Ile) + AMP + diphosphate. In terms of biological role, catalyzes the attachment of isoleucine to tRNA(Ile). As IleRS can inadvertently accommodate and process structurally similar amino acids such as valine, to avoid such errors it has two additional distinct tRNA(Ile)-dependent editing activities. One activity is designated as 'pretransfer' editing and involves the hydrolysis of activated Val-AMP. The other activity is designated 'posttransfer' editing and involves deacylation of mischarged Val-tRNA(Ile). The sequence is that of Isoleucine--tRNA ligase from Saccharophagus degradans (strain 2-40 / ATCC 43961 / DSM 17024).